The chain runs to 303 residues: Deoxyhypusine hydroxylase (303 aa).

Residue Met-1 is modified to N-acetylmethionine. HEAT-like PBS-type repeat units follow at residues 23 to 49, 54 to 80, 87 to 113, 175 to 201, 206 to 232, and 239 to 265; these read ARFRALFTLRGLGGPVAISWISRAFDD, LKHELAYCLGQMQDRRAIPVLLDVLRD, VRHEAGEALGAIGDPEVLEILKQYSTD, DRYRAMFALRDAGGKEAALALAEGLRC, FRHEIGYVLGQMQHEAAVPQLAAALAQ, and VRHECAEALGAIARPACLAALRAHVAD. 3 residues coordinate Fe cation: His-56, His-89, and Glu-90. Fe cation contacts are provided by His-208, His-241, and Glu-242.

It belongs to the deoxyhypusine hydroxylase family. The cofactor is Fe(2+).

The catalysed reaction is [eIF5A protein]-deoxyhypusine + AH2 + O2 = [eIF5A protein]-hypusine + A + H2O. It participates in protein modification; eIF5A hypusination. In terms of biological role, catalyzes the hydroxylation of the N(6)-(4-aminobutyl)-L-lysine intermediate produced by deoxyhypusine synthase/DHPS on a critical lysine of the eukaryotic translation initiation factor 5A/eIF-5A. This is the second step of the post-translational modification of that lysine into an unusual amino acid residue named hypusine. Hypusination is unique to mature eIF-5A factor and is essential for its function. The protein is Deoxyhypusine hydroxylase of Bos taurus (Bovine).